The primary structure comprises 556 residues: Guanine nucleotide-binding protein-like 3 homolog (556 aa).

Positions 29-50 (NRKVKKEAKKNGTTNKKEKTIS) are disordered. Residues 58-95 (KEEILVQAEQEREKIKVRQEAAKEAAKIHRIEKRKNNL) adopt a coiled-coil conformation. The region spanning 138 to 317 (ASEVRKTVEI…LIDSPGVILV (180 aa)) is the CP-type G domain. GTP-binding positions include 184-187 (NKID), 266-273 (GFPNVGKS), and 310-313 (DSPG). Disordered regions lie at residues 461–508 (APHN…PESL) and 525–556 (KKQKKKSKKTANRADKLSDSLGNMLGGDAMEM). Positions 466–478 (DEEEDDDDEMETD) are enriched in acidic residues. Basic residues predominate over residues 525–535 (KKQKKKSKKTA).

The protein belongs to the TRAFAC class YlqF/YawG GTPase family.

Its subcellular location is the nucleus. Its function is as follows. May play a role in regulating cellular proliferation in both germline and somatic tissues. This is Guanine nucleotide-binding protein-like 3 homolog from Caenorhabditis elegans.